The following is a 165-amino-acid chain: Putative 4-hydroxy-4-methyl-2-oxoglutarate aldolase (165 aa).

Residues 80-83 and R102 contribute to the substrate site; that span reads GGNL. D103 lines the a divalent metal cation pocket.

This sequence belongs to the class II aldolase/RraA-like family. In terms of assembly, homotrimer. A divalent metal cation is required as a cofactor.

It carries out the reaction 4-hydroxy-4-methyl-2-oxoglutarate = 2 pyruvate. It catalyses the reaction oxaloacetate + H(+) = pyruvate + CO2. Catalyzes the aldol cleavage of 4-hydroxy-4-methyl-2-oxoglutarate (HMG) into 2 molecules of pyruvate. Also contains a secondary oxaloacetate (OAA) decarboxylase activity due to the common pyruvate enolate transition state formed following C-C bond cleavage in the retro-aldol and decarboxylation reactions. This is Putative 4-hydroxy-4-methyl-2-oxoglutarate aldolase from Cupriavidus taiwanensis (strain DSM 17343 / BCRC 17206 / CCUG 44338 / CIP 107171 / LMG 19424 / R1) (Ralstonia taiwanensis (strain LMG 19424)).